Consider the following 560-residue polypeptide: DNA ligase B (560 aa).

Lysine 124 serves as the catalytic N6-AMP-lysine intermediate.

It belongs to the NAD-dependent DNA ligase family. LigB subfamily.

The enzyme catalyses NAD(+) + (deoxyribonucleotide)n-3'-hydroxyl + 5'-phospho-(deoxyribonucleotide)m = (deoxyribonucleotide)n+m + AMP + beta-nicotinamide D-nucleotide.. Catalyzes the formation of phosphodiester linkages between 5'-phosphoryl and 3'-hydroxyl groups in double-stranded DNA using NAD as a coenzyme and as the energy source for the reaction. The polypeptide is DNA ligase B (Escherichia coli (strain K12 / DH10B)).